We begin with the raw amino-acid sequence, 87 residues long: Large ribosomal subunit protein bL31B (87 aa).

It belongs to the bacterial ribosomal protein bL31 family. Type B subfamily. Part of the 50S ribosomal subunit.

This is Large ribosomal subunit protein bL31B from Escherichia coli O8 (strain IAI1).